Here is a 393-residue protein sequence, read N- to C-terminus: Na(+)/H(+) antiporter NhaA 2 (393 aa).

A run of 11 helical transmembrane segments spans residues 18–38 (SGGL…NSQL), 53–73 (LSVQ…MVGL), 91–111 (ILPG…YLAF), 120–140 (GWAI…SLLG), 149–169 (VFLA…IGLF), 172–192 (TGVS…LVAL), 208–228 (LVLW…GVLL), 263–283 (FIIV…GLGM), 294–314 (VAAG…LLLV), 332–352 (GTTL…LLAF), and 363–383 (IGIL…LRFS).

It belongs to the NhaA Na(+)/H(+) (TC 2.A.33) antiporter family.

The protein localises to the cell inner membrane. It catalyses the reaction Na(+)(in) + 2 H(+)(out) = Na(+)(out) + 2 H(+)(in). Functionally, na(+)/H(+) antiporter that extrudes sodium in exchange for external protons. The protein is Na(+)/H(+) antiporter NhaA 2 of Brucella anthropi (strain ATCC 49188 / DSM 6882 / CCUG 24695 / JCM 21032 / LMG 3331 / NBRC 15819 / NCTC 12168 / Alc 37) (Ochrobactrum anthropi).